We begin with the raw amino-acid sequence, 364 residues long: MAQTLLNDTFLRALLREPTDYTPIWLMRQAGRYLPEYNATRARAGSFLGLAKQPDYATEVTLQPLERFPLDAAILFSDILTIPDAMGLGLDFAAGEGPKFAHPVRTEADVAKLAVPDIGATLGYVTDAVREIRRALTDGEGRQRVPLIGFSGSPWTLACYMVEGGGSDDFRTVKSMAYARPDLMHRILDVNAQAVAAYLNAQIEAGAQAVMIFDTWGGALADGAYQRFSLDYVRRVLAQLKREHDGARVPAIAFTKGGGLWLEELAATGVDAVGLDWTVNLGRARERVAGRVALQGNLDPTILFAPPEAIRAEARAVLDSYGNHPGHVFNLGHGISQFTPPEHVAELVDEVHRHSRAIRSGAGS.

Substrate contacts are provided by residues 28-32 (RQAGR), Asp-78, Tyr-160, Thr-215, and His-333.

It belongs to the uroporphyrinogen decarboxylase family. Homodimer.

The protein resides in the cytoplasm. The enzyme catalyses uroporphyrinogen III + 4 H(+) = coproporphyrinogen III + 4 CO2. It participates in porphyrin-containing compound metabolism; protoporphyrin-IX biosynthesis; coproporphyrinogen-III from 5-aminolevulinate: step 4/4. Its function is as follows. Catalyzes the decarboxylation of four acetate groups of uroporphyrinogen-III to yield coproporphyrinogen-III. The protein is Uroporphyrinogen decarboxylase of Burkholderia pseudomallei (strain 668).